Here is a 281-residue protein sequence, read N- to C-terminus: Formamidopyrimidine-DNA glycosylase (281 aa).

Residue proline 2 is the Schiff-base intermediate with DNA of the active site. The active-site Proton donor is the glutamate 3. Lysine 58 serves as the catalytic Proton donor; for beta-elimination activity. The DNA site is built by histidine 94, arginine 113, and arginine 156. The FPG-type; degenerate zinc-finger motif lies at alanine 241–arginine 281. Arginine 271 serves as the catalytic Proton donor; for delta-elimination activity.

It belongs to the FPG family. As to quaternary structure, monomer. It depends on Zn(2+) as a cofactor.

The catalysed reaction is Hydrolysis of DNA containing ring-opened 7-methylguanine residues, releasing 2,6-diamino-4-hydroxy-5-(N-methyl)formamidopyrimidine.. The enzyme catalyses 2'-deoxyribonucleotide-(2'-deoxyribose 5'-phosphate)-2'-deoxyribonucleotide-DNA = a 3'-end 2'-deoxyribonucleotide-(2,3-dehydro-2,3-deoxyribose 5'-phosphate)-DNA + a 5'-end 5'-phospho-2'-deoxyribonucleoside-DNA + H(+). In terms of biological role, involved in base excision repair of DNA damaged by oxidation or by mutagenic agents. Acts as a DNA glycosylase that recognizes and removes damaged bases. Has a preference for oxidized purines, such as 7,8-dihydro-8-oxoguanine (8-oxoG). Has AP (apurinic/apyrimidinic) lyase activity and introduces nicks in the DNA strand. Cleaves the DNA backbone by beta-delta elimination to generate a single-strand break at the site of the removed base with both 3'- and 5'-phosphates. In Rhodospirillum rubrum (strain ATCC 11170 / ATH 1.1.1 / DSM 467 / LMG 4362 / NCIMB 8255 / S1), this protein is Formamidopyrimidine-DNA glycosylase.